A 246-amino-acid polypeptide reads, in one-letter code: 3'(2'),5'-bisphosphate nucleotidase CysQ (246 aa).

Residues glutamate 64, aspartate 83, leucine 85, aspartate 86, and aspartate 205 each coordinate Mg(2+). Position 64 (glutamate 64) interacts with substrate. Residues 85-88 (LDGT) and aspartate 205 each bind substrate.

It belongs to the inositol monophosphatase superfamily. CysQ family. It depends on Mg(2+) as a cofactor.

The protein resides in the cell inner membrane. It catalyses the reaction adenosine 3',5'-bisphosphate + H2O = AMP + phosphate. Functionally, converts adenosine-3',5'-bisphosphate (PAP) to AMP. This is 3'(2'),5'-bisphosphate nucleotidase CysQ from Escherichia coli O6:H1 (strain CFT073 / ATCC 700928 / UPEC).